The sequence spans 181 residues: Small ribosomal subunit protein uS4 (181 aa).

The region spanning 108–172 (RRLQTQVYRR…SPLVSDIHSE (65 aa)) is the S4 RNA-binding domain.

This sequence belongs to the universal ribosomal protein uS4 family. Part of the 30S ribosomal subunit. Contacts protein S5. The interaction surface between S4 and S5 is involved in control of translational fidelity.

Its function is as follows. One of the primary rRNA binding proteins, it binds directly to 16S rRNA where it nucleates assembly of the body of the 30S subunit. Functionally, with S5 and S12 plays an important role in translational accuracy. The chain is Small ribosomal subunit protein uS4 from Methanospirillum hungatei JF-1 (strain ATCC 27890 / DSM 864 / NBRC 100397 / JF-1).